We begin with the raw amino-acid sequence, 181 residues long: NAD(P)H-quinone oxidoreductase subunit I, chloroplastic (181 aa).

4Fe-4S ferredoxin-type domains lie at 55-84 (GRIH…VDWE) and 95-124 (KNYS…MTEE). The [4Fe-4S] cluster site is built by Cys64, Cys67, Cys70, Cys74, Cys104, Cys107, Cys110, and Cys114.

This sequence belongs to the complex I 23 kDa subunit family. In terms of assembly, NDH is composed of at least 16 different subunits, 5 of which are encoded in the nucleus. [4Fe-4S] cluster serves as cofactor.

Its subcellular location is the plastid. It localises to the chloroplast thylakoid membrane. The enzyme catalyses a plastoquinone + NADH + (n+1) H(+)(in) = a plastoquinol + NAD(+) + n H(+)(out). It catalyses the reaction a plastoquinone + NADPH + (n+1) H(+)(in) = a plastoquinol + NADP(+) + n H(+)(out). In terms of biological role, NDH shuttles electrons from NAD(P)H:plastoquinone, via FMN and iron-sulfur (Fe-S) centers, to quinones in the photosynthetic chain and possibly in a chloroplast respiratory chain. The immediate electron acceptor for the enzyme in this species is believed to be plastoquinone. Couples the redox reaction to proton translocation, and thus conserves the redox energy in a proton gradient. This Angiopteris evecta (Mule's foot fern) protein is NAD(P)H-quinone oxidoreductase subunit I, chloroplastic.